Here is a 502-residue protein sequence, read N- to C-terminus: ATP synthase subunit alpha, chloroplastic (502 aa).

An ATP-binding site is contributed by 170-177 (GDRQTGKT).

It belongs to the ATPase alpha/beta chains family. As to quaternary structure, F-type ATPases have 2 components, CF(1) - the catalytic core - and CF(0) - the membrane proton channel. CF(1) has five subunits: alpha(3), beta(3), gamma(1), delta(1), epsilon(1). CF(0) has four main subunits: a, b, b' and c.

Its subcellular location is the plastid. The protein localises to the chloroplast thylakoid membrane. It catalyses the reaction ATP + H2O + 4 H(+)(in) = ADP + phosphate + 5 H(+)(out). Functionally, produces ATP from ADP in the presence of a proton gradient across the membrane. The alpha chain is a regulatory subunit. In Tupiella akineta (Green alga), this protein is ATP synthase subunit alpha, chloroplastic.